Reading from the N-terminus, the 404-residue chain is Zinc transporter 10 (404 aa).

A signal peptide spans 1–22; it reads MESSSSSSYIPFIRQIAASVSA. The Extracellular portion of the chain corresponds to 23 to 49; it reads ASCDAVVGGGGDKDEECRDEAAALRLK. Residues 50-70 traverse the membrane as a helical segment; that stretch reads MVAVAAILIAGAAGVAIPLVG. Over 71–86 the chain is Cytoplasmic; sequence RRRRGGGGGGGGGASS. A helical membrane pass occupies residues 87 to 107; the sequence is GGLFVLAKAFAAGVILATGFV. Over 108–129 the chain is Extracellular; that stretch reads HMLHDAEHALSNPCLPHSPWRR. A helical membrane pass occupies residues 130–150; the sequence is FPFPGFVAMLAALATLVVDFV. The Cytoplasmic segment spans residues 151–248; sequence GTHFYERKHR…GHEEGPSARH (98 aa). Residues 249 to 269 form a helical membrane-spanning segment; it reads VVVSQILELGIVSHSVIIGLS. Topologically, residues 270 to 280 are extracellular; the sequence is LGVSQSPCTIK. A helical membrane pass occupies residues 281–301; sequence PLVAALSFHQFFEGFALGGCI. The Cytoplasmic portion of the chain corresponds to 302–311; that stretch reads SEAQLKNFSA. Residues 312–332 traverse the membrane as a helical segment; that stretch reads FLMAFFFAITTPAGITVGAAV. At 333–343 the chain is on the extracellular side; that stretch reads ASFYNPNSPRA. A helical membrane pass occupies residues 344–364; that stretch reads LVVEGILDSMSAGILIYMALV. Over 365–383 the chain is Cytoplasmic; sequence DLIAADFLSRKMSCNPRLQ. A helical transmembrane segment spans residues 384-404; it reads VGSYIALFLGAMAMAALALWA.

Belongs to the ZIP transporter (TC 2.A.5) family.

The protein resides in the cell membrane. Functionally, zinc transporter that may be involved in zinc uptake from the rhizosphere. This Oryza sativa subsp. japonica (Rice) protein is Zinc transporter 10 (ZIP10).